Consider the following 252-residue polypeptide: Imidazole glycerol phosphate synthase subunit HisF (252 aa).

Active-site residues include Asp11 and Asp130.

This sequence belongs to the HisA/HisF family. As to quaternary structure, heterodimer of HisH and HisF.

It localises to the cytoplasm. The catalysed reaction is 5-[(5-phospho-1-deoxy-D-ribulos-1-ylimino)methylamino]-1-(5-phospho-beta-D-ribosyl)imidazole-4-carboxamide + L-glutamine = D-erythro-1-(imidazol-4-yl)glycerol 3-phosphate + 5-amino-1-(5-phospho-beta-D-ribosyl)imidazole-4-carboxamide + L-glutamate + H(+). It participates in amino-acid biosynthesis; L-histidine biosynthesis; L-histidine from 5-phospho-alpha-D-ribose 1-diphosphate: step 5/9. IGPS catalyzes the conversion of PRFAR and glutamine to IGP, AICAR and glutamate. The HisF subunit catalyzes the cyclization activity that produces IGP and AICAR from PRFAR using the ammonia provided by the HisH subunit. This chain is Imidazole glycerol phosphate synthase subunit HisF, found in Azoarcus sp. (strain BH72).